Reading from the N-terminus, the 1207-residue chain is Histidine kinase 1 (1207 aa).

The span at 1 to 10 shows a compositional bias: polar residues; the sequence is MRGDSFSMSI. Positions 1–20 are disordered; the sequence is MRGDSFSMSIENLPDSPMGS. The Cytoplasmic segment spans residues 1–81; that stretch reads MRGDSFSMSI…SSYYSVFVVR (81 aa). A helical membrane pass occupies residues 82-102; it reads LAIMVMLAILIGLLTVLTWHF. Residues 103–446 are Extracellular-facing; that stretch reads TRIYTKQSLQ…GKVDERAFKT (344 aa). The helical transmembrane segment at 447-467 threads the bilayer; sequence LIILISASVCIFFIGCVCILI. Residues 468 to 1207 are Cytoplasmic-facing; the sequence is LTNGVSKEMK…PSAFQTSLSA (740 aa). Residues 505–763 enclose the Histidine kinase domain; that stretch reads NMSHELRTPM…LMRLYLILST (259 aa). H508 is subject to Phosphohistidine; by autocatalysis. Disordered regions lie at residues 964–987 and 1000–1021; these read DTCS…VKPS and DATT…PEEE. Over residues 975 to 984 the composition is skewed to basic and acidic residues; the sequence is SGEKQVDKSV. A compositionally biased stretch (low complexity) spans 1000-1014; the sequence is DATTSNDDSTSASMT. The region spanning 1045 to 1196 is the Response regulatory domain; the sequence is RILLAEDTPV…LMVSTILSLT (152 aa). D1127 carries the 4-aspartylphosphate modification.

In terms of assembly, interacts with AHP2, depending of the phosphorylation state of Asp-1075 in the receiver domain, but probably not with AHP1 and AHP3. Post-translationally, autophosphorylated predominantly on His residues. Activation probably requires a transfer of a phosphate group between a His in the transmitter domain and an Asp of the receiver domain. Mostly expressed in roots, and, to a lower extent, in stems, leaves and flowers.

The protein resides in the cell membrane. It carries out the reaction ATP + protein L-histidine = ADP + protein N-phospho-L-histidine.. Functionally, functions as an osmosensor histidine kinase that detects water stress and transmits the stress signal to a downstream MAPK cascade. This protein undergoes an ATP-dependent autophosphorylation at a conserved histidine residue in the kinase core, and a phosphoryl group is then transferred to a conserved aspartate residue in the receiver domain. Positive regulator of drought and salt stress responses, and abscisic acid (ABA) signaling. Confers drought tolerance, probably by regulating levels of ABA accumulation. Plays a redundant role in regulating plant growth and development. Required for the regulation of desiccation processes during seed formation. The sequence is that of Histidine kinase 1 (AHK1) from Arabidopsis thaliana (Mouse-ear cress).